The primary structure comprises 498 residues: Ammonium transporter 3 member 1 (498 aa).

A run of 11 helical transmembrane segments spans residues 33-53, 58-78, 143-163, 171-191, 206-226, 241-261, 276-296, 301-321, 325-345, 369-389, and 412-432; these read ISAT…YGSI, WAVN…LCWV, MVYF…GSLL, WMLF…FSLW, GGYV…YWVG, VLLM…FNGG, NTNI…VIFF, VIGA…GAGL, WAAI…MMVV, GFLG…SLFL, and VAGA…VCLA. The tract at residues 478–498 is disordered; the sequence is DNNDTHHNNNKAAPSGVTQNV. Over residues 487-498 the composition is skewed to polar residues; sequence NKAAPSGVTQNV.

This sequence belongs to the ammonia transporter channel (TC 1.A.11.2) family. Expressed in root.

The protein localises to the membrane. Functionally, involved in ammonium transport. In Oryza sativa subsp. japonica (Rice), this protein is Ammonium transporter 3 member 1 (AMT3-1).